Reading from the N-terminus, the 536-residue chain is Heparanase-like protein 3 (536 aa).

The signal sequence occupies residues 1-24; the sequence is MAYRQILAIVLFLCVFQFLDCTVS. N-linked (GlcNAc...) asparagine glycosylation is found at N30, N122, N176, and N191. The active-site Proton donor is the E202. N-linked (GlcNAc...) asparagine glycans are attached at residues N265 and N308. E319 serves as the catalytic Nucleophile. N370, N427, N438, and N510 each carry an N-linked (GlcNAc...) asparagine glycan.

This sequence belongs to the glycosyl hydrolase 79 family.

It localises to the lysosome membrane. It is found in the secreted. Its function is as follows. Endoglycosidase which is a cell surface and extracellular matrix-degrading enzyme. Cleaves heparan sulfate proteoglycans (HSPGs) into heparan sulfate side chains and core proteoglycans. The chain is Heparanase-like protein 3 from Arabidopsis thaliana (Mouse-ear cress).